A 92-amino-acid chain; its full sequence is Small ribosomal subunit protein uS19 (92 aa).

Belongs to the universal ribosomal protein uS19 family.

Protein S19 forms a complex with S13 that binds strongly to the 16S ribosomal RNA. The polypeptide is Small ribosomal subunit protein uS19 (Buchnera aphidicola subsp. Baizongia pistaciae (strain Bp)).